The primary structure comprises 237 residues: E3 ubiquitin-protein ligase RNF166 (237 aa).

An RING-type zinc finger spans residues 33-73 (CPICLEVYHRPVAIGSCGHTFCGECLQPCLQVPSPLCPLCR). Zn(2+) is bound by residues C98, C101, H113, and C117. Residues 98-117 (CRGCNKKVTLAKMRVHISSC) form a C2HC RNF-type zinc finger. Residues 221 to 237 (DEEAAFQAALALSLSEN) enclose the UIM domain.

The protein localises to the cytoplasm. The enzyme catalyses S-ubiquitinyl-[E2 ubiquitin-conjugating enzyme]-L-cysteine + [acceptor protein]-L-lysine = [E2 ubiquitin-conjugating enzyme]-L-cysteine + N(6)-ubiquitinyl-[acceptor protein]-L-lysine.. It participates in protein modification; protein ubiquitination. In terms of biological role, E3 ubiquitin-protein ligase that promotes the ubiquitination of different substrates. In turn, participates in different biological processes including interferon production or autophagy. Plays a role in the activation of RNA virus-induced interferon-beta production by promoting the ubiquitination of TRAF3 and TRAF6. Also plays a role in the early recruitment of autophagy adapters to bacteria. Mediates 'Lys-29' and 'Lys-33'-linked ubiquitination of SQSTM1 leading to xenophagic targeting of bacteria and inhibition of their replication. This chain is E3 ubiquitin-protein ligase RNF166 (RNF166), found in Homo sapiens (Human).